We begin with the raw amino-acid sequence, 215 residues long: 3-isopropylmalate dehydratase small subunit (215 aa).

Belongs to the LeuD family. LeuD type 1 subfamily. Heterodimer of LeuC and LeuD.

The catalysed reaction is (2R,3S)-3-isopropylmalate = (2S)-2-isopropylmalate. The protein operates within amino-acid biosynthesis; L-leucine biosynthesis; L-leucine from 3-methyl-2-oxobutanoate: step 2/4. Catalyzes the isomerization between 2-isopropylmalate and 3-isopropylmalate, via the formation of 2-isopropylmaleate. This Stutzerimonas stutzeri (strain A1501) (Pseudomonas stutzeri) protein is 3-isopropylmalate dehydratase small subunit.